Consider the following 303-residue polypeptide: UDP-3-O-acyl-N-acetylglucosamine deacetylase (303 aa).

Zn(2+)-binding residues include histidine 78, histidine 237, and aspartate 241. Histidine 264 (proton donor) is an active-site residue.

This sequence belongs to the LpxC family. Zn(2+) is required as a cofactor.

The enzyme catalyses a UDP-3-O-[(3R)-3-hydroxyacyl]-N-acetyl-alpha-D-glucosamine + H2O = a UDP-3-O-[(3R)-3-hydroxyacyl]-alpha-D-glucosamine + acetate. The protein operates within glycolipid biosynthesis; lipid IV(A) biosynthesis; lipid IV(A) from (3R)-3-hydroxytetradecanoyl-[acyl-carrier-protein] and UDP-N-acetyl-alpha-D-glucosamine: step 2/6. Functionally, catalyzes the hydrolysis of UDP-3-O-myristoyl-N-acetylglucosamine to form UDP-3-O-myristoylglucosamine and acetate, the committed step in lipid A biosynthesis. In Pseudomonas putida (strain ATCC 700007 / DSM 6899 / JCM 31910 / BCRC 17059 / LMG 24140 / F1), this protein is UDP-3-O-acyl-N-acetylglucosamine deacetylase.